Reading from the N-terminus, the 549-residue chain is Arginine--tRNA ligase (549 aa).

The 'HIGH' region signature appears at 132–142 (ANPTGPLHLAH).

Belongs to the class-I aminoacyl-tRNA synthetase family. As to quaternary structure, monomer.

The protein localises to the cytoplasm. It carries out the reaction tRNA(Arg) + L-arginine + ATP = L-arginyl-tRNA(Arg) + AMP + diphosphate. The polypeptide is Arginine--tRNA ligase (Renibacterium salmoninarum (strain ATCC 33209 / DSM 20767 / JCM 11484 / NBRC 15589 / NCIMB 2235)).